The primary structure comprises 82 residues: Small ribosomal subunit protein uS17 (82 aa).

The protein belongs to the universal ribosomal protein uS17 family. As to quaternary structure, part of the 30S ribosomal subunit.

One of the primary rRNA binding proteins, it binds specifically to the 5'-end of 16S ribosomal RNA. This chain is Small ribosomal subunit protein uS17, found in Shewanella sediminis (strain HAW-EB3).